The following is a 267-amino-acid chain: Thyroxine 5-deiodinase (267 aa).

At M1 to H15 the chain is on the cytoplasmic side. Residues A16–L36 form a helical; Signal-anchor for type II membrane protein membrane-spanning segment. Residues D37–V267 lie on the Extracellular side of the membrane. U131 is a catalytic residue. Position 131 (U131) is a non-standard amino acid, selenocysteine.

It belongs to the iodothyronine deiodinase family. In terms of assembly, monomer. Homodimer. May undergo minor heretodimerization with DIO1 and DIO2.

It is found in the cell membrane. The protein resides in the endosome membrane. It catalyses the reaction 3,3',5'-triiodo-L-thyronine + iodide + A + H(+) = L-thyroxine + AH2. The enzyme catalyses 3,3'-diiodo-L-thyronine + iodide + A + H(+) = 3,3',5-triiodo-L-thyronine + AH2. It carries out the reaction 3-iodo-L-thyronine + iodide + A + H(+) = 3,5-diiodo-L-thyronine + AH2. The catalysed reaction is L-thyronine + iodide + A + H(+) = 3-iodo-L-thyronine + AH2. It catalyses the reaction 3',5'-diiodo-L-thyronine + iodide + A + H(+) = 3,3',5'-triiodo-L-thyronine + AH2. The enzyme catalyses 3'-iodo-L-thyronine + iodide + A + H(+) = 3,3'-diiodo-L-thyronine + AH2. It carries out the reaction 3,3',5'-triiodothyronamine + iodide + A + H(+) = 3,3',5,5'-tetraiodothyronamine + AH2. The catalysed reaction is 3',5'-diiodothyronamine + iodide + A + H(+) = 3,3',5'-triiodothyronamine + AH2. It catalyses the reaction 3,3'-diiodothyronamine + iodide + A + H(+) = 3,3',5-triiodothyronamine + AH2. The enzyme catalyses 3-iodothyronamine + iodide + A + H(+) = 3,5-diiodothyronamine + AH2. It carries out the reaction 3'-iodothyronamine + iodide + A + H(+) = 3,3'-diiodothyronamine + AH2. The catalysed reaction is thyronamine + iodide + A + H(+) = 3-iodothyronamine + AH2. Its function is as follows. Plays a crucial role in the metabolism of thyroid hormones (TH) and has specific roles in TH activation and inactivation by deiodination. Catalyzes the deiodination of L-thyroxine (T4) to 3,3',5'-triiodothyronine (rT3), 3,5,3'-triiodothyronine (T3) to 3,3'-diiodothyronine (3,3'-T2), 3,5-diiodothyronine (3,5-T2) to 3-monoiodothyronine (3-T1), rT3 to 3',5'-diiodothyronine (3',5'-T2) and 3,3'-T2 to 3'-monoiodothyronine (3'-T1) via inner-ring deiodination (IRD). Catalyzes the deiodination of 3-T1 to L-thyronine (T0) via outer-ring deiodination (ORD). Catalyzes the tyrosyl ring deiodinations of 3,3',5,5'-tetraiodothyronamine, 3,3',5'-triiodothyronamine, 3,5,3'-triiodothyronamine, 3,5-diiodothyronamine, 3,3'-diiodothyronamine and 3-iodothyronamine. In Sparus aurata (Gilthead sea bream), this protein is Thyroxine 5-deiodinase (dio3).